Reading from the N-terminus, the 917-residue chain is Nitrate reductase [NADH] 2 (917 aa).

The disordered stretch occupies residues 1–72 (MAASVDNRQY…SEDENETHNS (72 aa)). The span at 37 to 47 (AHQNQTTNQTV) shows a compositional bias: polar residues. Over residues 57-67 (DDEDVSSEDEN) the composition is skewed to acidic residues. C191 is a Mo-molybdopterin binding site. One can recognise a Cytochrome b5 heme-binding domain in the interval 542–617 (AKMYSMSEVK…LEDYRIGELI (76 aa)). 2 residues coordinate heme: H577 and H600. The FAD-binding FR-type domain occupies 660–772 (RAKVPVQLVE…KGPLGHVEYL (113 aa)). Residues 712 to 715 (RAYT), 729 to 733 (VVKIY), F734, F741, 746 to 748 (LMS), and T799 contribute to the FAD site.

The protein belongs to the nitrate reductase family. As to quaternary structure, homodimer. FAD serves as cofactor. Requires heme as cofactor. It depends on Mo-molybdopterin as a cofactor. Root, leaf, and shoot.

It catalyses the reaction nitrite + NAD(+) + H2O = nitrate + NADH + H(+). Nitrate reductase is a key enzyme involved in the first step of nitrate assimilation in plants, fungi and bacteria. This Arabidopsis thaliana (Mouse-ear cress) protein is Nitrate reductase [NADH] 2 (NIA2).